We begin with the raw amino-acid sequence, 798 residues long: Palmitoyl thioesterase CPT1C (798 aa).

Over 1-52 the chain is Cytoplasmic; sequence MAEAHQASSLLSSLSSDGAEVELSSPVWQEIYLCALRSWKRHLWRVWNDFLA. A helical membrane pass occupies residues 53-75; it reads GVVPATPLSWLFLFSTIQLACLL. Over 76–103 the chain is Lumenal; sequence QLDPSLGLMEKIKELLPDWGGQHHQLQG. Residues 104 to 126 traverse the membrane as a helical segment; sequence FLSAAVFASCLWGALIFTLHVAL. The Cytoplasmic portion of the chain corresponds to 127–798; that stretch reads RLLLSHHGWL…PNTPTSSTNL (672 aa). The active-site Proton acceptor is the histidine 469. 551–563 lines the CoA pocket; that stretch reads GKSFIKCCHVSSD. The (R)-carnitine site is built by tyrosine 585, serine 587, and threonine 598. Positions 759–798 are required for interaction with GRIA1; that stretch reads LFRVGQHFKRQFRGENSDYRYNFLSCKTVDPNTPTSSTNL.

Belongs to the carnitine/choline acetyltransferase family. In terms of assembly, peripherally associated with AMPAR complex. AMPAR complex consists of an inner core made of 4 pore-forming GluA/GRIA proteins (GRIA1, GRIA2, GRIA3 and GRIA4) and 4 major auxiliary subunits arranged in a twofold symmetry. One of the two pairs of distinct binding sites is occupied either by CNIH2, CNIH3 or CACNG2, CACNG3. The other harbors CACNG2, CACNG3, CACNG4, CACNG8 or GSG1L. This inner core of AMPAR complex is complemented by outer core constituents binding directly to the GluA/GRIA proteins at sites distinct from the interaction sites of the inner core constituents. Outer core constituents include at least PRRT1, PRRT2, CKAMP44/SHISA9, FRRS1L and NRN1. The proteins of the inner and outer core serve as a platform for other, more peripherally associated AMPAR constituents, including CPT1C. Alone or in combination, these auxiliary subunits control the gating and pharmacology of the AMPAR complex and profoundly impact their biogenesis and protein processing. Interacts with SACM1L; the interaction regulates SACM1L phosphatidylinositol-3-phosphatase activity and translocation to endoplasmic reticulum/trans Golgi network in a malonyl-CoA dependent manner. Interacts with ATL1. In terms of tissue distribution, predominantly expressed in brain (at protein level) and testis, highly expressed in the hippocampus, amygdala and cerebellum. Expressed in neurons but not astrocytes. Expressed in the ventral horn from spinal cords.

It is found in the synapse. Its subcellular location is the cell projection. It localises to the axon. The protein resides in the dendrite. The protein localises to the dendritic spine. It is found in the endoplasmic reticulum membrane. The enzyme catalyses S-hexadecanoyl-L-cysteinyl-[protein] + H2O = L-cysteinyl-[protein] + hexadecanoate + H(+). Functionally, palmitoyl thioesterase specifically expressed in the endoplasmic reticulum of neurons. Modulates the trafficking of the glutamate receptor, AMPAR, to plasma membrane through depalmitoylation of GRIA1. Also regulates AMPR trafficking through the regulation of SACM1L phosphatidylinositol-3-phosphatase activity by interaction in a malonyl-CoA dependent manner. Binds malonyl-CoA and couples malonyl-CoA to ceramide levels, necessary for proper spine maturation and contributing to systemic energy homeostasis and appetite control. Binds to palmitoyl-CoA, but does not have carnitine palmitoyltransferase 1 catalytic activity or at very low levels. This Mus musculus (Mouse) protein is Palmitoyl thioesterase CPT1C (Cpt1c).